We begin with the raw amino-acid sequence, 184 residues long: UPF0149 protein PputGB1_5261 (184 aa).

Belongs to the UPF0149 family.

The protein is UPF0149 protein PputGB1_5261 of Pseudomonas putida (strain GB-1).